Consider the following 390-residue polypeptide: Galactokinase (390 aa).

34 to 37 is a substrate binding site; the sequence is EHTD. ATP is bound by residues serine 68 and 122–128; that span reads GSGLSSS. Residues serine 128 and glutamate 160 each contribute to the Mg(2+) site. Aspartate 172 acts as the Proton acceptor in catalysis. Tyrosine 221 provides a ligand contact to substrate.

It belongs to the GHMP kinase family. GalK subfamily.

Its subcellular location is the cytoplasm. It catalyses the reaction alpha-D-galactose + ATP = alpha-D-galactose 1-phosphate + ADP + H(+). The protein operates within carbohydrate metabolism; galactose metabolism. Catalyzes the transfer of the gamma-phosphate of ATP to D-galactose to form alpha-D-galactose-1-phosphate (Gal-1-P). The polypeptide is Galactokinase (Chloroflexus aggregans (strain MD-66 / DSM 9485)).